A 431-amino-acid polypeptide reads, in one-letter code: MSIDLNWETLTTGPDGIALAEKIRDFVHAKFQTVTLPRFIKGVKVHTFDFGSIAPEVELKDICDPLPDFYEDLDDDDGGSDEDDEGSNSCQTDEENEAAKTLRERRKMDRVERTANGSSNVSNPPSYTDTRYPGLRSMQASGDNGSPFLGVSTPGIPGGTSNLSYFHSQLASGFSGTQTPLAAVAGAHLPQGWPDRPSPSLHMSALRNQSHTSLSHTASERPMTPPQIADLSQQSIREKASASTLAVSSSTTGPVTRGGATEKTIPEEQTSEGEEPTSPPRRFREPKPEDLQTVFRVRYSGNIRLSLTVDILLDYPMPSFVGIPVRLNITGLSFDGVAVLAYIRKRAHFCFLSPEDAYAAIGADEKEAGGSGGMKMGALLHEIKVESEIGQRENGKQVLKNVGKVEKFVLEQVRRIFEDEFVYPSFWTFLV.

Residues 1–431 form the SMP-LTD domain; that stretch reads MSIDLNWETL…VYPSFWTFLV (431 aa). Disordered stretches follow at residues 68–153 and 209–289; these read DFYE…GVST and QSHT…PKPE. Acidic residues predominate over residues 69–96; it reads FYEDLDDDDGGSDEDDEGSNSCQTDEEN. Positions 97 to 113 are enriched in basic and acidic residues; that stretch reads EAAKTLRERRKMDRVER. The segment covering 115–129 has biased composition (polar residues); that stretch reads ANGSSNVSNPPSYTD. The span at 241 to 252 shows a compositional bias: low complexity; that stretch reads SASTLAVSSSTT.

The protein belongs to the MDM12 family. In terms of assembly, component of the ER-mitochondria encounter structure (ERMES) or MDM complex, composed of mmm1, mdm10, mdm12 and mdm34. A mmm1 homodimer associates with one molecule of mdm12 on each side in a pairwise head-to-tail manner, and the SMP-LTD domains of mmm1 and mdm12 generate a continuous hydrophobic tunnel for phospholipid trafficking.

The protein localises to the mitochondrion outer membrane. Its subcellular location is the endoplasmic reticulum membrane. Functionally, component of the ERMES/MDM complex, which serves as a molecular tether to connect the endoplasmic reticulum (ER) and mitochondria. Components of this complex are involved in the control of mitochondrial shape and protein biogenesis, and function in nonvesicular lipid trafficking between the ER and mitochondria. Mdm12 is required for the interaction of the ER-resident membrane protein mmm1 and the outer mitochondrial membrane-resident beta-barrel protein mdm10. The mdm12-mmm1 subcomplex functions in the major beta-barrel assembly pathway that is responsible for biogenesis of all mitochondrial outer membrane beta-barrel proteins, and acts in a late step after the SAM complex. The mdm10-mdm12-mmm1 subcomplex further acts in the TOM40-specific pathway after the action of the mdm12-mmm1 complex. Essential for establishing and maintaining the structure of mitochondria and maintenance of mtDNA nucleoids. This chain is Mitochondrial distribution and morphology protein 12, found in Sclerotinia sclerotiorum (strain ATCC 18683 / 1980 / Ss-1) (White mold).